The chain runs to 376 residues: Phosphatidylinositol/phosphatidylcholine transfer protein SFH11 (376 aa).

A compositionally biased stretch (basic and acidic residues) spans 1 to 20 (MQETDRDIHISDGTMNKEEQ). The tract at residues 1-24 (MQETDRDIHISDGTMNKEEQSPNN) is disordered. Residues 92–266 (EYGEVKKHYP…FLGGNCTCSD (175 aa)) form the CRAL-TRIO domain. Residues 323–357 (MEKYAALKTAVKDSQKRIEMLEISLHETKKVLNGL) adopt a coiled-coil conformation.

The protein belongs to the SFH family.

Its subcellular location is the golgi apparatus membrane. It is found in the cell membrane. Functionally, required for transport of secretory proteins from the Golgi complex. Catalyzes the transfer of phosphatidylinositol and phosphatidylcholine between membranes in vitro. In Arabidopsis thaliana (Mouse-ear cress), this protein is Phosphatidylinositol/phosphatidylcholine transfer protein SFH11 (SFH11).